A 25-amino-acid polypeptide reads, in one-letter code: Small ribosomal subunit protein eS32A (25 aa).

Positions 1–25 (MRDKWRKKRVRRLKRKRRKMRARSK) are disordered.

Belongs to the eukaryotic ribosomal protein eS32 family. In terms of assembly, component of the large ribosomal subunit (LSU). Mature yeast ribosomes consist of a small (40S) and a large (60S) subunit. The 40S small subunit contains 1 molecule of ribosomal RNA (18S rRNA) and at least 33 different proteins. The large 60S subunit contains 3 rRNA molecules (25S, 5.8S and 5S rRNA) and at least 46 different proteins.

The protein resides in the cytoplasm. It is found in the nucleus. Its function is as follows. Component of the ribosome, a large ribonucleoprotein complex responsible for the synthesis of proteins in the cell. The small ribosomal subunit (SSU) binds messenger RNAs (mRNAs) and translates the encoded message by selecting cognate aminoacyl-transfer RNA (tRNA) molecules. The large subunit (LSU) contains the ribosomal catalytic site termed the peptidyl transferase center (PTC), which catalyzes the formation of peptide bonds, thereby polymerizing the amino acids delivered by tRNAs into a polypeptide chain. The nascent polypeptides leave the ribosome through a tunnel in the LSU and interact with protein factors that function in enzymatic processing, targeting, and the membrane insertion of nascent chains at the exit of the ribosomal tunnel. The chain is Small ribosomal subunit protein eS32A (rpl4101) from Schizosaccharomyces pombe (strain 972 / ATCC 24843) (Fission yeast).